A 215-amino-acid chain; its full sequence is Urease accessory protein UreG (215 aa).

24-31 (GPVGSGKT) provides a ligand contact to GTP.

It belongs to the SIMIBI class G3E GTPase family. UreG subfamily. Homodimer. UreD, UreF and UreG form a complex that acts as a GTP-hydrolysis-dependent molecular chaperone, activating the urease apoprotein by helping to assemble the nickel containing metallocenter of UreC. The UreE protein probably delivers the nickel.

Its subcellular location is the cytoplasm. Facilitates the functional incorporation of the urease nickel metallocenter. This process requires GTP hydrolysis, probably effectuated by UreG. The sequence is that of Urease accessory protein UreG from Burkholderia ambifaria (strain ATCC BAA-244 / DSM 16087 / CCUG 44356 / LMG 19182 / AMMD) (Burkholderia cepacia (strain AMMD)).